Here is a 932-residue protein sequence, read N- to C-terminus: Potassium voltage-gated channel subfamily KQT member 5 (932 aa).

At 1 to 125 the chain is on the cytoplasmic side; the sequence is MPRHHAGGEE…YNVLERPRGW (125 aa). Position 88 is a phosphoserine (Ser88). A helical membrane pass occupies residues 126 to 146; that stretch reads AFIYHAFVFLLVFGCLILSVF. The Extracellular segment spans residues 147–156; sequence STIPEHTKLA. The helical transmembrane segment at 157-177 threads the bilayer; sequence SSCLLILEFVMIVVFGLEFII. Topologically, residues 178 to 200 are cytoplasmic; the sequence is RIWSAGCCCRYRGWQGRLRFARK. The helical transmembrane segment at 201–221 threads the bilayer; the sequence is PFCVIDTIVLIASIAVVSAKT. Topologically, residues 222 to 229 are extracellular; that stretch reads QGNIFATS. Residues 230–252 traverse the membrane as a helical; Voltage-sensor segment; sequence ALRSLRFLQILRMVRMDRRGGTW. A 1,2-diacyl-sn-glycero-3-phospho-(1D-myo-inositol-4,5-bisphosphate) contacts are provided by Arg248 and Lys264. At 253–266 the chain is on the cytoplasmic side; the sequence is KLLGSVVYAHSKEL. Residues 267 to 287 form a helical membrane-spanning segment; it reads ITAWYIGFLVLIFSSFLVYLV. At 288–298 the chain is on the extracellular side; it reads EKDANKEFSTY. Positions 299 to 319 form an intramembrane region, pore-forming; the sequence is ADALWWGTITLTTIGYGDKTP. At 320–325 the chain is on the extracellular side; the sequence is LTWLGR. The helical transmembrane segment at 326–346 threads the bilayer; that stretch reads LLSAGFALLGISFFALPAGIL. At 347–932 the chain is on the cytoplasmic side; sequence GSGFALKVQE…ALSLPHVKLK (586 aa). Residue Lys361 coordinates a 1,2-diacyl-sn-glycero-3-phospho-(1D-myo-inositol-4,5-bisphosphate). An interaction with CALM region spans residues 370 to 378; that stretch reads AANLIQCVW. Positions 404-465 are disordered; that stretch reads SPTKKEQGEA…GSPTKVQKSW (62 aa). The segment covering 431–440 has biased composition (polar residues); it reads RGQSIKSRQA. Ser447 is subject to Phosphoserine. Residues 521-528 are interaction with CALM; it reads VIRAIRIM. The tract at residues 655–678 is disordered; sequence SDYQSPVDSKDLSGSAQNSGCLSR. The residue at position 831 (Ser831) is a Phosphoserine. Residues 876–885 are compositionally biased toward acidic residues; that stretch reads VGPEETETDT. Residues 876-919 form a disordered region; that stretch reads VGPEETETDTFDAAPQPAREAAFASDSLRTGRSRSSQSICKAGE. Low complexity predominate over residues 888–899; it reads AAPQPAREAAFA. Over residues 902 to 914 the composition is skewed to polar residues; it reads SLRTGRSRSSQSI.

This sequence belongs to the potassium channel family. KQT (TC 1.A.1.15) subfamily. Kv7.5/KCNQ5 sub-subfamily. Homotetramer; forms a functional homotetrameric channel resulting in the expression of a small M-current. Heterotetramer with KCNQ3; forms heterotetrameric M-channel responsible for the native M-current. Heterotetramer with KCNQ1; forms a functional voltage-gated potassium channel. Interacts (via C-terminus) with calmodulin/CALM1; forms a heterooctameric structure (with 4:4 KCNQ1:CALM stoichiometry); the interaction is calcium-independent, constitutive and participates in the channel function. As to expression, strongly expressed in brain and skeletal muscle. In brain, expressed in cerebral cortex, occipital pole, frontal lobe and temporal lobe. Lower levels in hippocampus and putamen. Low to undetectable levels in medulla, cerebellum and thalamus.

It is found in the cell membrane. The enzyme catalyses K(+)(in) = K(+)(out). Phosphatidylinositol-4,5-bisphosphate (PIP2) is essential to activate KCNQ5 channel by inducing the coupling of the voltage-sensing domain (VSD) and the pore-forming domain (PD). Calcium suppresses KCNQ5 channel current through calcium-bound CALM C-terminus. Therefore CALM acts as calcium sensor that controls channel activity. Activated by niflumic acid and the anticonvulsant retigabine. Inhibited by barium, linopirdine, XE991 and tetraethylammonium (as homomer). Insensitive to tetraethylammonium in KCNQ3-KCNQ5 heteromers. Functionally, pore-forming subunit of the voltage-gated potassium (Kv) channel broadly expressed in brain and involved in the regulation of neuronal excitability. Associates with KCNQ3/Kv7.3 pore-forming subunit to form a potassium channel which contributes to M-type current, a slowly activating and deactivating potassium conductance which plays a critical role in determining the subthreshold electrical excitability of neurons. Contributes, with other potassium channels, to the molecular diversity of a heterogeneous population of M-channels, varying in kinetic and pharmacological properties, which underlie this physiologically important current. Also forms a functional channel with KCNQ1/Kv7.1 subunit that may contribute to vasoconstriction and hypertension. Channel may be selectively permeable in vitro to other cations besides potassium, in decreasing order of affinity K(+) = Rb(+) &gt; Cs(+) &gt; Na(+). Similar to the native M-channel, KCNQ3-KCNQ5 potassium channel is suppressed by activation of the muscarinic acetylcholine receptor CHRM1. The sequence is that of Potassium voltage-gated channel subfamily KQT member 5 from Homo sapiens (Human).